Consider the following 72-residue polypeptide: MAGNDVIEIEGVIKETKPNANFIVELENGARIQAGVSGKIRKNYIRILVGDRVTVEMSPYDLTKGRITYRHK.

The S1-like domain maps to methionine 1–lysine 72.

It belongs to the IF-1 family. In terms of assembly, component of the 30S ribosomal translation pre-initiation complex which assembles on the 30S ribosome in the order IF-2 and IF-3, IF-1 and N-formylmethionyl-tRNA(fMet); mRNA recruitment can occur at any time during PIC assembly.

Its subcellular location is the cytoplasm. Its function is as follows. One of the essential components for the initiation of protein synthesis. Stabilizes the binding of IF-2 and IF-3 on the 30S subunit to which N-formylmethionyl-tRNA(fMet) subsequently binds. Helps modulate mRNA selection, yielding the 30S pre-initiation complex (PIC). Upon addition of the 50S ribosomal subunit IF-1, IF-2 and IF-3 are released leaving the mature 70S translation initiation complex. In Oenococcus oeni (strain ATCC BAA-331 / PSU-1), this protein is Translation initiation factor IF-1.